We begin with the raw amino-acid sequence, 102 residues long: Protein RnfH (102 aa).

It belongs to the UPF0125 (RnfH) family.

The polypeptide is Protein RnfH (Pseudomonas entomophila (strain L48)).